The chain runs to 275 residues: Putative hydro-lyase SPO1111 (275 aa).

It belongs to the D-glutamate cyclase family.

In Ruegeria pomeroyi (strain ATCC 700808 / DSM 15171 / DSS-3) (Silicibacter pomeroyi), this protein is Putative hydro-lyase SPO1111.